A 156-amino-acid chain; its full sequence is Persephin (156 aa).

A signal peptide spans 1–21 (MAVGKFLLGSLLLLSLQLGQG). 3 disulfide bridges follow: Cys66–Cys124, Cys93–Cys152, and Cys97–Cys154.

This sequence belongs to the TGF-beta family. GDNF subfamily. Homodimer; disulfide-linked. Interacts with GFRA4 coreceptor and RET: forms a 2:2:2 ternary complex composed of PSPN ligand, GFRA4 and RET receptor.

The protein resides in the secreted. Its function is as follows. Growth factor that exhibits neurotrophic activity on mesencephalic dopaminergic and motor neurons. Acts by binding to its coreceptor, GFRA4, leading to autophosphorylation and activation of the RET receptor. The chain is Persephin from Homo sapiens (Human).